Consider the following 609-residue polypeptide: Frizzled and smoothened-like protein E (609 aa).

Residues 1 to 20 (MEMIRIFLIYLILKIIIING) form the signal peptide. The Extracellular segment spans residues 21 to 259 (ENNEYSKGYG…QWKRVYDMAK (239 aa)). The 158-residue stretch at 35 to 192 (FPGSKCLNYV…GLYKVPCIDP (158 aa)) folds into the FZ domain. 4 disulfide bridges follow: C40–C118, C53–C111, C100–C149, and C138–C189. N75, N130, N172, N198, N217, and N245 each carry an N-linked (GlcNAc...) asparagine glycan. The helical transmembrane segment at 260–280 (TLSSISFICACYNILTFGILN) threads the bilayer. Residues 281–288 (RKRKSKYN) lie on the Cytoplasmic side of the membrane. A helical transmembrane segment spans residues 289 to 309 (ICITLMSTSIALVYLTDIIKF). Residues 310 to 337 (GYGIEEFLCPEPGRSAVQNDAACGITGA) lie on the Extracellular side of the membrane. A helical transmembrane segment spans residues 338 to 358 (MFHFGITYCCCWAMTMSIVLF). The Cytoplasmic segment spans residues 359 to 365 (CSVKRIK). A helical transmembrane segment spans residues 366-386 (LFYFRHFMIGNTIFTIITTVI). At 387–408 (LLSAKKMVAGTGYIECWVRERW) the chain is on the extracellular side. The chain crosses the membrane as a helical span at residues 409–429 (FVITLFWLPCGIGLSIGIFCI). Topologically, residues 430–457 (GGVIHEIYNISKKVNIRESEFILRQIKP) are cytoplasmic. Residues 458-478 (FSLVFSVAGSFLYLFIFFFDV) form a helical membrane-spanning segment. Residues 479-511 (ERKIDSYKAAVADYVLCLLSGGSEETCFTTGPN) are Extracellular-facing. The chain crosses the membrane as a helical span at residues 512-532 (YASFFIFYFFIRVFGVLFFSI). Topologically, residues 533-609 (YGTSRVARDI…DSKSIELEKK (77 aa)) are cytoplasmic. A compositionally biased stretch (polar residues) spans 559 to 570 (ESGISRNNSRTD). The disordered stretch occupies residues 559–609 (ESGISRNNSRTDISFGKNNNSKNSNNSKNSNNSKNSNNSDNDSKSIELEKK). Residues 575 to 598 (KNNNSKNSNNSKNSNNSKNSNNSD) are compositionally biased toward low complexity. Positions 599-609 (NDSKSIELEKK) are enriched in basic and acidic residues.

The protein belongs to the G-protein coupled receptor Fz/Smo family.

The protein localises to the membrane. This Dictyostelium discoideum (Social amoeba) protein is Frizzled and smoothened-like protein E (fslE).